We begin with the raw amino-acid sequence, 111 residues long: MTRGFGPFGKIQEALKKAQEVRDGAQRLQKELEEMEIVGEAGNGLVKVTVNGNQEPLKVSLDPQVLQEPVDVVEDLLLTAMVNAYTQSAETMRKRMEELTGNISLPGLGLG.

The protein belongs to the YbaB/EbfC family. Homodimer.

The protein resides in the cytoplasm. It is found in the nucleoid. In terms of biological role, binds to DNA and alters its conformation. May be involved in regulation of gene expression, nucleoid organization and DNA protection. The chain is Nucleoid-associated protein CYA_1369 from Synechococcus sp. (strain JA-3-3Ab) (Cyanobacteria bacterium Yellowstone A-Prime).